Consider the following 233-residue polypeptide: Purine nucleoside phosphorylase DeoD-type (233 aa).

Histidine 4 lines the a purine D-ribonucleoside pocket. Phosphate-binding positions include glycine 20, arginine 24, arginine 43, and 87–90; that span reads RVGT. Residues 178–180 and 202–203 contribute to the a purine D-ribonucleoside site; these read EME and SD. Residue aspartate 203 is the Proton donor of the active site.

Belongs to the PNP/UDP phosphorylase family. Homohexamer; trimer of homodimers.

It catalyses the reaction a purine D-ribonucleoside + phosphate = a purine nucleobase + alpha-D-ribose 1-phosphate. It carries out the reaction a purine 2'-deoxy-D-ribonucleoside + phosphate = a purine nucleobase + 2-deoxy-alpha-D-ribose 1-phosphate. Its function is as follows. Catalyzes the reversible phosphorolytic breakdown of the N-glycosidic bond in the beta-(deoxy)ribonucleoside molecules, with the formation of the corresponding free purine bases and pentose-1-phosphate. This is Purine nucleoside phosphorylase DeoD-type from Listeria innocua serovar 6a (strain ATCC BAA-680 / CLIP 11262).